Consider the following 246-residue polypeptide: Probable transcriptional regulatory protein YebC (246 aa).

Positions 1–20 (MAGHSKWANTRHRKAAQDAK) are disordered.

It belongs to the TACO1 family.

It localises to the cytoplasm. This chain is Probable transcriptional regulatory protein YebC, found in Escherichia coli O6:K15:H31 (strain 536 / UPEC).